Consider the following 106-residue polypeptide: Insulin-like peptide 04 (106 aa).

The signal sequence occupies residues 1–22; it reads MPRTFLVVLIYILAGFLCSTSA. Residues 23–37 constitute a propeptide that is removed on maturation; the sequence is LRKVNEASGIKTDGS. Disulfide bonds link Cys45-Cys50, Cys46-Cys80, and Cys59-Cys68. Positions 86–106 are cleaved as a propeptide — c peptide; that stretch reads RRKRSLTVDKREAKKFIRQRR.

This sequence belongs to the insulin family.

It is found in the secreted. Insulin decreases blood glucose concentration. May have evolved to activate insulin receptors (INSR) in vertebrates. Molecular docking studies reveals unique interaction with the human insulin receptor. In vivo, insulin-like peptide injection reduces blood glucose levels in two models of zebrafish diabetes (streptozotocin- and glucose-induced). Also shorter swimming distance of zebrafish larvae, an effect which is not observed with human insulin. This is Insulin-like peptide 04 from Exaiptasia diaphana (Tropical sea anemone).